Here is an 80-residue protein sequence, read N- to C-terminus: Centromere protein X (80 aa).

The protein belongs to the CENP-X/MHF2 family. In terms of assembly, heterodimer with CENPX, sometimes called MHF; this interaction stabilizes both partners. MHF heterodimers can assemble to form tetrameric structures. MHF also coassemble with CENPT-CENPW heterodimers at centromeres to form the tetrameric CENP-T-W-S-X complex. Forms a discrete complex with FANCM and CENPX, called FANCM-MHF; this interaction, probably mediated by direct binding between CENPS and FANCM, leads to synergistic activation of double-stranded DNA binding and strongly stimulates FANCM-mediated DNA remodeling. Recruited by FANCM to the Fanconi anemia (FA) core complex, which consists of CENPS, CENPX, FANCA, FANCB, FANCC, FANCE, FANCF, FANCG, FANCL, FANCM, FAAP24 and FAAP100. The FA core complex associates with Bloom syndrome (BLM) complex, which consists of at least BLM, DNA topoisomerase 3-alpha (TOP3A), RMI1/BLAP75, RPA1/RPA70 and RPA2/RPA32. The super complex between FA and BLM is called BRAFT.

The protein localises to the nucleus. It localises to the chromosome. The protein resides in the centromere. Its subcellular location is the kinetochore. Its function is as follows. DNA-binding component of the Fanconi anemia (FA) core complex. Required for the normal activation of the FA pathway, leading to monoubiquitination of the FANCI-FANCD2 complex in response to DNA damage, cellular resistance to DNA cross-linking drugs, and prevention of chromosomal breakage. In complex with CENPS (MHF heterodimer), crucial cofactor for FANCM in both binding and ATP-dependent remodeling of DNA. Stabilizes FANCM. In complex with CENPS and FANCM (but not other FANC proteins), rapidly recruited to blocked forks and promotes gene conversion at blocked replication forks. In complex with CENPS, CENPT and CENPW (CENP-T-W-S-X heterotetramer), involved in the formation of a functional kinetochore outer plate, which is essential for kinetochore-microtubule attachment and faithful mitotic progression. As a component of MHF and CENP-T-W-S-X complexes, binds DNA and bends it to form a nucleosome-like structure. DNA-binding function is fulfilled in the presence of CENPS, with the following preference for DNA substates: Holliday junction &gt; double-stranded &gt; splay arm &gt; single-stranded. Does not bind DNA on its own. The chain is Centromere protein X (CENPX) from Gallus gallus (Chicken).